A 200-amino-acid chain; its full sequence is Small ribosomal subunit protein uS4 (200 aa).

The segment at 22 to 43 (TGKELERRPYAPGQHGPTQRKK) is disordered. An S4 RNA-binding domain is found at 92–170 (QRLDNIVYRL…VPEYVTFDAE (79 aa)).

It belongs to the universal ribosomal protein uS4 family. In terms of assembly, part of the 30S ribosomal subunit. Contacts protein S5. The interaction surface between S4 and S5 is involved in control of translational fidelity.

Its function is as follows. One of the primary rRNA binding proteins, it binds directly to 16S rRNA where it nucleates assembly of the body of the 30S subunit. In terms of biological role, with S5 and S12 plays an important role in translational accuracy. The polypeptide is Small ribosomal subunit protein uS4 (Listeria welshimeri serovar 6b (strain ATCC 35897 / DSM 20650 / CCUG 15529 / CIP 8149 / NCTC 11857 / SLCC 5334 / V8)).